Reading from the N-terminus, the 178-residue chain is Large ribosomal subunit protein uL6 (178 aa).

Belongs to the universal ribosomal protein uL6 family. In terms of assembly, part of the 50S ribosomal subunit.

In terms of biological role, this protein binds to the 23S rRNA, and is important in its secondary structure. It is located near the subunit interface in the base of the L7/L12 stalk, and near the tRNA binding site of the peptidyltransferase center. The sequence is that of Large ribosomal subunit protein uL6 from Halobacterium salinarum (strain ATCC 700922 / JCM 11081 / NRC-1) (Halobacterium halobium).